We begin with the raw amino-acid sequence, 519 residues long: Cytochrome P450 52-E3 (519 aa).

A helical transmembrane segment spans residues 10–30 (VLGGISVSFLLAYQAIYFYFI). Residue Cys461 coordinates heme.

It belongs to the cytochrome P450 family. The cofactor is heme.

It localises to the membrane. The catalysed reaction is an omega-methyl-long-chain fatty acid + reduced [NADPH--hemoprotein reductase] + O2 = an omega-hydroxy-long-chain fatty acid + oxidized [NADPH--hemoprotein reductase] + H2O + H(+). It catalyses the reaction (9Z)-octadecenoate + reduced [NADPH--hemoprotein reductase] + O2 = 18-hydroxy-(9Z)-octadecenoate + oxidized [NADPH--hemoprotein reductase] + H2O + H(+). The enzyme catalyses hexadecanoate + reduced [NADPH--hemoprotein reductase] + O2 = 16-hydroxyhexadecanoate + oxidized [NADPH--hemoprotein reductase] + H2O + H(+). It carries out the reaction (9Z)-hexadecenoate + reduced [NADPH--hemoprotein reductase] + O2 = (9Z)-16-hydroxyhexadec-9-enoate + oxidized [NADPH--hemoprotein reductase] + H2O + H(+). Functionally, catalyzes the terminal (at the omega-position) hydroxylation of a fatty acid. Probably involved in alkane metabolism. Has minor activity toward myristic acid, palmitic acid, palmitoleic acid and oleic acid. In Starmerella bombicola (Yeast), this protein is Cytochrome P450 52-E3.